Reading from the N-terminus, the 462-residue chain is Probable Xaa-Pro aminopeptidase pepP (462 aa).

Mn(2+) contacts are provided by aspartate 259, aspartate 270, glutamate 393, and glutamate 433.

Belongs to the peptidase M24B family. Mn(2+) serves as cofactor.

The enzyme catalyses Release of any N-terminal amino acid, including proline, that is linked to proline, even from a dipeptide or tripeptide.. In terms of biological role, catalyzes the removal of a penultimate prolyl residue from the N-termini of peptides. The sequence is that of Probable Xaa-Pro aminopeptidase pepP (pepP) from Metarhizium robertsii (strain ARSEF 23 / ATCC MYA-3075) (Metarhizium anisopliae (strain ARSEF 23)).